Consider the following 339-residue polypeptide: 3-isopropylmalate dehydrogenase (339 aa).

Residues arginine 88, arginine 98, arginine 122, and aspartate 212 each coordinate substrate. Mg(2+) is bound by residues aspartate 212, aspartate 236, and aspartate 240. Residue 272–284 (GSAPDIAGQGIAD) coordinates NAD(+).

The protein belongs to the isocitrate and isopropylmalate dehydrogenases family. LeuB type 2 subfamily. Homodimer. Requires Mg(2+) as cofactor. Mn(2+) serves as cofactor.

The protein resides in the cytoplasm. The enzyme catalyses (2R,3S)-3-isopropylmalate + NAD(+) = 4-methyl-2-oxopentanoate + CO2 + NADH. Its pathway is amino-acid biosynthesis; L-leucine biosynthesis; L-leucine from 3-methyl-2-oxobutanoate: step 3/4. In terms of biological role, catalyzes the oxidation of 3-carboxy-2-hydroxy-4-methylpentanoate (3-isopropylmalate) to 3-carboxy-4-methyl-2-oxopentanoate. The product decarboxylates to 4-methyl-2 oxopentanoate. This is 3-isopropylmalate dehydrogenase from Corynebacterium urealyticum (strain ATCC 43042 / DSM 7109).